Consider the following 83-residue polypeptide: DNA-directed RNA polymerase subunit Rpo5 (83 aa).

This sequence belongs to the archaeal Rpo5/eukaryotic RPB5 RNA polymerase subunit family. As to quaternary structure, part of the RNA polymerase complex.

Its subcellular location is the cytoplasm. The enzyme catalyses RNA(n) + a ribonucleoside 5'-triphosphate = RNA(n+1) + diphosphate. Its function is as follows. DNA-dependent RNA polymerase (RNAP) catalyzes the transcription of DNA into RNA using the four ribonucleoside triphosphates as substrates. This chain is DNA-directed RNA polymerase subunit Rpo5, found in Metallosphaera sedula (strain ATCC 51363 / DSM 5348 / JCM 9185 / NBRC 15509 / TH2).